Consider the following 313-residue polypeptide: NAD-capped RNA hydrolase NudC (313 aa).

Arginine 111 provides a ligand contact to substrate. Residues 168 to 293 (PRIDPAVICL…DWSSASESKL (126 aa)) form the Nudix hydrolase domain. Residues alanine 202, glutamate 218, and glutamate 222 each contribute to the a divalent metal cation site. Residues 203 to 224 (GFVEAGESFEVCVAREIREEIG) carry the Nudix box motif. Substrate is bound at residue 236 to 243 (QQWPFPRS). Glutamate 264 contacts a divalent metal cation.

Belongs to the Nudix hydrolase family. NudC subfamily. As to quaternary structure, homodimer. Mg(2+) is required as a cofactor. It depends on Mn(2+) as a cofactor.

It carries out the reaction a 5'-end NAD(+)-phospho-ribonucleoside in mRNA + H2O = a 5'-end phospho-adenosine-phospho-ribonucleoside in mRNA + beta-nicotinamide D-ribonucleotide + 2 H(+). It catalyses the reaction NAD(+) + H2O = beta-nicotinamide D-ribonucleotide + AMP + 2 H(+). The catalysed reaction is NADH + H2O = reduced beta-nicotinamide D-ribonucleotide + AMP + 2 H(+). MRNA decapping enzyme that specifically removes the nicotinamide adenine dinucleotide (NAD) cap from a subset of mRNAs by hydrolyzing the diphosphate linkage to produce nicotinamide mononucleotide (NMN) and 5' monophosphate mRNA. The NAD-cap is present at the 5'-end of some mRNAs and stabilizes RNA against 5'-processing. Has preference for mRNAs with a 5'-end purine. Catalyzes the hydrolysis of a broad range of dinucleotide pyrophosphates. This chain is NAD-capped RNA hydrolase NudC, found in Mycobacterium tuberculosis (strain ATCC 25177 / H37Ra).